Consider the following 363-residue polypeptide: Inactive CLIP domain-containing serine protease A8 (363 aa).

Residues 1–25 (MPSWWCCCCLVVLLYAQRMIVPSSA) form the signal peptide. The region spanning 33–82 (LQECPGGFCSPKYLCPNGTYNEANAQNQEIIMLRFGEEDVCQDYMQVCCS) is the Clip domain. 3 disulfides stabilise this stretch: Cys-36-Cys-80, Cys-41-Cys-73, and Cys-47-Cys-81. N-linked (GlcNAc...) asparagine glycans are attached at residues Asn-49, Asn-83, Asn-117, and Asn-166. Residues 114 to 360 (VEGNRTYAQY…FVTWINATIE (247 aa)) form the Peptidase S1 domain. 3 cysteine pairs are disulfide-bonded: Cys-245-Cys-317, Cys-276-Cys-297, and Cys-307-Cys-336. Residues Asn-319 and Asn-356 are each glycosylated (N-linked (GlcNAc...) asparagine).

Belongs to the peptidase S1 family. CLIP subfamily. In terms of assembly, heterodimer of a light chain and a heavy chain; disulfide-linked. Post-translationally, secreted as a full-length protein. Proteolytically cleaved into two chains which remain covalently linked. Cleavage is induced by Gram-positive or Gram-negative bacteria infection.

It localises to the secreted. Its function is as follows. Inactive serine protease which plays an essential role in the innate immune response against bacteria, fungi and protozoa infection by activating the melanization cascade. In the melanization cascade, acts downstream of TEP1 and SPCLIP1 to promote CLIPA28 and CLIPC9 proteolytic cleavage and CLIPC9 recruitment to microbial surfaces. In the resistant strain L3-5, required for the melanization of killed parasite P.berghei ookinetes which results in their clearance. In the susceptible strain G3, appears to be dispensable for ookinete elimination which occurs by lysis. Required for the melanization of Gram-positive and Gram-negative bacteria. During the late stage of fungus B.bassiana-mediated infection, required for the initiation of hyphae melanization by promoting prophenoloxidase PPO activation. This is Inactive CLIP domain-containing serine protease A8 from Anopheles gambiae (African malaria mosquito).